The chain runs to 678 residues: MFKKLFGQLQRIGKALMLPVAILPAAGLLLAIGTAMQGESLQHYLPFIQNGGIQSVAEMMTGAGGIIFDNLPMIFAMGVAIGLASGDGVAAIAAFVGYLVMNKTMGAFLHVSPDNVNDAASGYASVLGIPTLQTGVFGGIIIGALAAWCYNKFYNISLPSYLGFFAGKRFVPIMMATTSFILAFPMAWIWPSIQTGLNAFSEGLLDSNTGLAVFLFGFIKRLLIPFGLHHIFHAPFWFEFGAWKNAAGEMIHGDQRIFIEQIREGSKLTAGKFMQGEFPVMMFGLPAAALAIYHTAKPENKKVVAGLMGSAALTSFLTGITEPLEFSFLFVAPVLFFVHAILDGLSFLILYLLNVHLGYTFSGGFIDYVLLGVLPNKTQWWLVIPVGVVYAFIYYFVFRFLILKFKYKTPGREDKQAQFTNSSASELPFNVLKAMGGEENIKHLDACITRLRVEVKEKGKVDVAGLKALGASGVLEVGNNMQAIFGPKSDQIKHDMSLIMKGEITKPQETTVTEEESEEVVHIERASEVNIYAPGNGQVIPLSEVPDQVFAQKMMGDGVGFIPADGKIVAPFDGTVKTIFPTKHAIGLESDQGLELLIHIGIDTVKLNGEGFESFVETDDRVHKGQVLMQIDLDYITAHAPSTVTPLIITNLEDRQLSVEDVKDVTAEQLIIKVIDDK.

The region spanning 3 to 414 (KKLFGQLQRI…FKYKTPGRED (412 aa)) is the PTS EIIC type-1 domain. Helical transmembrane passes span 16-36 (LMLPVAILPAAGLLLAIGTAM), 63-83 (AGGIIFDNLPMIFAMGVAIGL), 89-109 (VAAIAAFVGYLVMNKTMGAFL), 126-146 (VLGIPTLQTGVFGGIIIGALA), 170-190 (FVPIMMATTSFILAFPMAWIW), 211-231 (LAVFLFGFIKRLLIPFGLHHI), 273-293 (FMQGEFPVMMFGLPAAALAIY), 303-323 (VVAGLMGSAALTSFLTGITEP), 329-349 (LFVAPVLFFVHAILDGLSFLI), 355-375 (VHLGYTFSGGFIDYVLLGVLP), and 382-402 (LVIPVGVVYAFIYYFVFRFLI). One can recognise a PTS EIIB type-1 domain in the interval 425 to 506 (SELPFNVLKA…SLIMKGEITK (82 aa)). Cysteine 447 acts as the Phosphocysteine intermediate; for EIIB activity in catalysis. A PTS EIIA type-1 domain is found at 547 to 651 (DQVFAQKMMG…STVTPLIITN (105 aa)). Histidine 599 acts as the Tele-phosphohistidine intermediate; for EIIA activity in catalysis.

It localises to the cell membrane. The catalysed reaction is N(pros)-phospho-L-histidyl-[protein] + D-glucose(out) = D-glucose 6-phosphate(in) + L-histidyl-[protein]. Functionally, the phosphoenolpyruvate-dependent sugar phosphotransferase system (sugar PTS), a major carbohydrate active transport system, catalyzes the phosphorylation of incoming sugar substrates concomitantly with their translocation across the cell membrane. This system is involved in glucose transport. This chain is PTS system glucose-specific EIICBA component (ptsG), found in Staphylococcus saprophyticus subsp. saprophyticus (strain ATCC 15305 / DSM 20229 / NCIMB 8711 / NCTC 7292 / S-41).